Here is a 314-residue protein sequence, read N- to C-terminus: tRNA dimethylallyltransferase (314 aa).

The segment at 1-24 is disordered; that stretch reads MAEEPQRSPAPTSPFAFTVPSNPL. ATP is bound at residue 40 to 47; that stretch reads GPTASGKS. A substrate-binding site is contributed by 42 to 47; that stretch reads TASGKS.

The protein belongs to the IPP transferase family. As to quaternary structure, monomer. Mg(2+) serves as cofactor.

The enzyme catalyses adenosine(37) in tRNA + dimethylallyl diphosphate = N(6)-dimethylallyladenosine(37) in tRNA + diphosphate. Its function is as follows. Catalyzes the transfer of a dimethylallyl group onto the adenine at position 37 in tRNAs that read codons beginning with uridine, leading to the formation of N6-(dimethylallyl)adenosine (i(6)A). The polypeptide is tRNA dimethylallyltransferase (Cereibacter sphaeroides (strain ATCC 17029 / ATH 2.4.9) (Rhodobacter sphaeroides)).